The primary structure comprises 159 residues: uncharacterized protein (159 aa).

The N-acetyltransferase domain maps to 1–139 (MNIIPTCQVP…TARKMKPEIP (139 aa)).

This is an uncharacterized protein from Bacillus subtilis (strain 168).